Here is a 352-residue protein sequence, read N- to C-terminus: Maleylacetate reductase (352 aa).

This sequence belongs to the iron-containing alcohol dehydrogenase family.

The catalysed reaction is 3-oxoadipate + NAD(+) = maleylacetate + NADH + H(+). It carries out the reaction 3-oxoadipate + NADP(+) = maleylacetate + NADPH + H(+). The protein operates within aromatic compound metabolism; 3-chlorocatechol degradation. This chain is Maleylacetate reductase (clcE), found in Pseudomonas knackmussii (strain DSM 6978 / CCUG 54928 / LMG 23759 / B13).